The sequence spans 148 residues: UPF0178 protein BH16190 (148 aa).

Belongs to the UPF0178 family.

In Bartonella henselae (strain ATCC 49882 / DSM 28221 / CCUG 30454 / Houston 1) (Rochalimaea henselae), this protein is UPF0178 protein BH16190.